A 119-amino-acid polypeptide reads, in one-letter code: Protein TusC (119 aa).

Belongs to the DsrF/TusC family. As to quaternary structure, heterohexamer, formed by a dimer of trimers. The hexameric TusBCD complex contains 2 copies each of TusB, TusC and TusD. The TusBCD complex interacts with TusE.

The protein resides in the cytoplasm. Its function is as follows. Part of a sulfur-relay system required for 2-thiolation of 5-methylaminomethyl-2-thiouridine (mnm(5)s(2)U) at tRNA wobble positions. The protein is Protein TusC of Klebsiella pneumoniae (strain 342).